The following is a 61-amino-acid chain: Prophage outer membrane lipoprotein RzoR (61 aa).

An N-terminal signal peptide occupies residues 1–19; sequence MRKLKMMLCVMMLPLVVVG. Cys20 carries the N-palmitoyl cysteine lipid modification. Cys20 carries the S-diacylglycerol cysteine lipid modification.

It belongs to the lambdalikevirus o-spanin family. In terms of assembly, homodimer; disulfide-linked. Interacts (via C-terminus) with RZ (via C-terminus). Part of the spanin complex which spans the entire periplasmic space. The spanin complex is composed of spanin, inner membrane subunit and spanin, outer membrane subunit.

It is found in the cell outer membrane. Functionally, component of the spanin complex that disrupts the outer membrane and causes cell lysis during virus exit. The spanin complex conducts the final step in cell lysis by disrupting the outer membrane after holin and endolysin action have permeabilized the inner membrane and degraded the host peptidoglycans. The chain is Prophage outer membrane lipoprotein RzoR (rzoR) from Escherichia coli (strain K12).